Here is a 127-residue protein sequence, read N- to C-terminus: MLQLLLAVFIGGGTGSVARWLLSMRFNPLHQAIPLGTLAANLIGAFIIGMGFAWFSRMTNIDPVWKVLITTGFCGGLTTFSTFSAEVVFLLQEGRFGWALLNVFVNLLGSFAMTALAFWLFSASTAH.

A run of 4 helical transmembrane segments spans residues 4 to 24 (LLLA…LLSM), 35 to 55 (LGTL…FAWF), 71 to 91 (TGFC…VFLL), and 103 to 123 (VFVN…LFSA). Positions 75 and 78 each coordinate Na(+).

Belongs to the fluoride channel Fluc/FEX (TC 1.A.43) family.

Its subcellular location is the cell inner membrane. It catalyses the reaction fluoride(in) = fluoride(out). Na(+) is not transported, but it plays an essential structural role and its presence is essential for fluoride channel function. Fluoride-specific ion channel. Important for reducing fluoride concentration in the cell, thus reducing its toxicity. This is Fluoride-specific ion channel FluC from Escherichia coli O8 (strain IAI1).